The sequence spans 213 residues: BREX protein BrxA (213 aa).

This sequence belongs to the BrxA family.

Functionally, BREX systems (bacteriophage exclusion) provide immunity against bacteriophage. A probably non-essential part of a type 1 BREX system which protects against dsDNA phage. This system allows phage adsorption but prevents phage DNA replication, without degradation of the phage DNA. Methylation of bacterial DNA by PglX guides self/non-self discrimination. When the brxA-brxB-brxC-pglX-pglZ-brxL genes are transformed into a susceptible E.coli strain (BW25113) they confer very high resistance to infection by bacteriophage VR7 and VpaE1, about 100-fold protection against lambda, T5 and T7 and no protection against RNA phage Qbeta, ssDNA phage M13 or dSDNA phage T4 and VR5. Glycosylated phage DNA is not susceptible to BREX. The BREX system does not confer resistance to lysogenic lambda phage, i.e. prophage that are integrated into the chromosomal DNA and then induced to form phage. This is BREX protein BrxA from Escherichia coli O9:H4 (strain HS).